The sequence spans 373 residues: Protein-glutamate methylesterase/protein-glutamine glutaminase 2 (373 aa).

Residues 4–121 (KVLVVDDSGF…SRNPEKVKQL (118 aa)) enclose the Response regulatory domain. Position 55 is a 4-aspartylphosphate (Asp-55). Residues 136–181 (FSSYSAPAPQPASAPAPAPSSFASSRSPAPAPAPARAAAPAASANS) are disordered. Positions 143 to 153 (APQPASAPAPA) are enriched in pro residues. Positions 154-181 (PSSFASSRSPAPAPAPARAAAPAASANS) are enriched in low complexity. Positions 182–370 (PAPKRKAYKL…LDDIGRHLVE (189 aa)) constitute a CheB-type methylesterase domain. Catalysis depends on residues Ser-197, His-224, and Asp-317.

Belongs to the CheB family. In terms of processing, phosphorylated by CheA. Phosphorylation of the N-terminal regulatory domain activates the methylesterase activity.

It is found in the cytoplasm. It catalyses the reaction [protein]-L-glutamate 5-O-methyl ester + H2O = L-glutamyl-[protein] + methanol + H(+). The enzyme catalyses L-glutaminyl-[protein] + H2O = L-glutamyl-[protein] + NH4(+). In terms of biological role, involved in chemotaxis. Part of a chemotaxis signal transduction system that modulates chemotaxis in response to various stimuli. Catalyzes the demethylation of specific methylglutamate residues introduced into the chemoreceptors (methyl-accepting chemotaxis proteins or MCP) by CheR. Also mediates the irreversible deamidation of specific glutamine residues to glutamic acid. The polypeptide is Protein-glutamate methylesterase/protein-glutamine glutaminase 2 (Pseudomonas fluorescens (strain ATCC BAA-477 / NRRL B-23932 / Pf-5)).